The primary structure comprises 295 residues: Putative clathrin assembly protein At5g65370 (295 aa).

One can recognise an ENTH domain in the interval 26–169; sequence CSSVNAKTID…SIAEVLGITP (144 aa).

The protein resides in the membrane. It localises to the clathrin-coated pit. It is found in the golgi apparatus. The protein localises to the cytoplasmic vesicle. Its subcellular location is the clathrin-coated vesicle. In Arabidopsis thaliana (Mouse-ear cress), this protein is Putative clathrin assembly protein At5g65370.